Here is a 300-residue protein sequence, read N- to C-terminus: Protease HtpX homolog (300 aa).

2 helical membrane-spanning segments follow: residues 5 to 25 (IFLLTLTNIAVIFLLTLFISL) and 41 to 61 (TLFLFSMVVGFTGSFISLAIS). His-146 provides a ligand contact to Zn(2+). The active site involves Glu-147. His-150 is a Zn(2+) binding site. 2 helical membrane passes run 161-181 (LLQGVVNTFVVFLSRIIGFFV) and 196-216 (IGFYLGMFISEIVLGLLASII). Position 225 (Glu-225) interacts with Zn(2+).

The protein belongs to the peptidase M48B family. It depends on Zn(2+) as a cofactor.

The protein localises to the cell inner membrane. This Methylacidiphilum infernorum (isolate V4) (Methylokorus infernorum (strain V4)) protein is Protease HtpX homolog.